Reading from the N-terminus, the 204-residue chain is Venom allergen 5 (204 aa).

4 disulfide bridges follow: Cys-4–Cys-17, Cys-8–Cys-101, Cys-26–Cys-94, and Cys-170–Cys-187. An SCP domain is found at 45-189 (LKEHNDFRQK…WHKHYLVCNY (145 aa)).

It belongs to the CRISP family. Venom allergen 5-like subfamily. In terms of tissue distribution, expressed by the venom gland.

The protein resides in the secreted. In terms of biological role, may have an ancestral function in the promotion of ovum fertilization by sperm. The sequence is that of Venom allergen 5 from Vespula flavopilosa (Downy yellowjacket).